A 126-amino-acid polypeptide reads, in one-letter code: Nascent polypeptide-associated complex protein (126 aa).

Positions 10–77 constitute an NAC-A/B domain; sequence PRMMKQMQKM…AKKVAKEEEK (68 aa).

This sequence belongs to the NAC-alpha family. Homodimer. Interacts with the ribosome. Binds ribosomal RNA.

In terms of biological role, contacts the emerging nascent chain on the ribosome. The chain is Nascent polypeptide-associated complex protein from Methanococcus maripaludis (strain C7 / ATCC BAA-1331).